The primary structure comprises 476 residues: MAQENTQVNAGVQGKIVQCIGAVVDVEFPRDQMPKVYDALKLEGSPLTLEVQQQLGDGVVRTIALGSSDGLRRGLMVSNTGNPITVPVGKATLGRIMDVLGSPIDERGPVSQELTASIHRKAPAYDELSPSQELLETGIKVIDLVCPFAKGGKVGLFGGAGVGKTVNMMELINNIAKAHSGLSVFAGVGERTREGNDFYHEMADSGVVNLEKLEDSKVAMVYGQMNEPPGNRLRVALTGLTIAESFRDEGRDVLFFVDNIYRYTLAGTEVSALLGRMPSAVGYQPTLAEEMGRLQERITSTKVGSITSIQAVYVPADDLTDPSPATTFAHLDSTVVLSRDIASLGIYPAVDPLDSTSRQLDPQVVGEEHYQVARGVQGTLQRYKELRDIIAILGMDELAPEDKLAVARARKIQRFLSQPFHVAEVFTGSPGKYVPLAETIRGFKMIVAGECDHLPEQAFYMVGTIDEAFEKAKKVA.

Residue 158-165 participates in ATP binding; that stretch reads GGAGVGKT.

The protein belongs to the ATPase alpha/beta chains family. In terms of assembly, F-type ATPases have 2 components, CF(1) - the catalytic core - and CF(0) - the membrane proton channel. CF(1) has five subunits: alpha(3), beta(3), gamma(1), delta(1), epsilon(1). CF(0) has three main subunits: a(1), b(2) and c(9-12). The alpha and beta chains form an alternating ring which encloses part of the gamma chain. CF(1) is attached to CF(0) by a central stalk formed by the gamma and epsilon chains, while a peripheral stalk is formed by the delta and b chains.

It is found in the cell inner membrane. It carries out the reaction ATP + H2O + 4 H(+)(in) = ADP + phosphate + 5 H(+)(out). Produces ATP from ADP in the presence of a proton gradient across the membrane. The catalytic sites are hosted primarily by the beta subunits. The chain is ATP synthase subunit beta from Paracidovorax citrulli (strain AAC00-1) (Acidovorax citrulli).